The primary structure comprises 450 residues: Ribulose bisphosphate carboxylase large chain (450 aa).

K4 carries the N6,N6,N6-trimethyllysine modification. Positions 113 and 163 each coordinate substrate. K165 acts as the Proton acceptor in catalysis. K167 is a substrate binding site. The Mg(2+) site is built by K191, D193, and E194. The residue at position 191 (K191) is an N6-carboxylysine. The Proton acceptor role is filled by H284. 3 residues coordinate substrate: R285, H317, and S369.

It belongs to the RuBisCO large chain family. Type I subfamily. Heterohexadecamer of 8 large chains and 8 small chains; disulfide-linked. The disulfide link is formed within the large subunit homodimers. Mg(2+) is required as a cofactor. In terms of processing, the disulfide bond which can form in the large chain dimeric partners within the hexadecamer appears to be associated with oxidative stress and protein turnover.

The protein localises to the plastid. The protein resides in the chloroplast. The enzyme catalyses 2 (2R)-3-phosphoglycerate + 2 H(+) = D-ribulose 1,5-bisphosphate + CO2 + H2O. The catalysed reaction is D-ribulose 1,5-bisphosphate + O2 = 2-phosphoglycolate + (2R)-3-phosphoglycerate + 2 H(+). In terms of biological role, ruBisCO catalyzes two reactions: the carboxylation of D-ribulose 1,5-bisphosphate, the primary event in carbon dioxide fixation, as well as the oxidative fragmentation of the pentose substrate in the photorespiration process. Both reactions occur simultaneously and in competition at the same active site. This chain is Ribulose bisphosphate carboxylase large chain, found in Sedum rubrotinctum (Jelly bean plant).